Here is a 124-residue protein sequence, read N- to C-terminus: uncharacterized protein (124 aa).

The protein resides in the cytoplasm. The protein localises to the nucleus. This is an uncharacterized protein from Schizosaccharomyces pombe (strain 972 / ATCC 24843) (Fission yeast).